A 283-amino-acid chain; its full sequence is CDP-abequose synthase (283 aa).

Residues 7–13 (GGSGYIG), 48–49 (EF), Tyr129, and Lys133 each bind NAD(+). Tyr129 functions as the Proton acceptor in the catalytic mechanism.

It belongs to the NAD(P)-dependent epimerase/dehydratase family.

The catalysed reaction is CDP-alpha-D-abequose + NADP(+) = CDP-4-dehydro-3,6-dideoxy-alpha-D-glucose + NADPH + H(+). The protein operates within bacterial outer membrane biogenesis; LPS O-antigen biosynthesis. Its function is as follows. The CDP-abequose synthase is involved in lipopolysaccharides (LPS) synthesis containing abequose which are important antigens of the cell surface responsible for the serological O specificity. Derivatives of the 3,6-dideoxyhexose group have a particular highly immunogenic character. In Yersinia pseudotuberculosis, this protein is CDP-abequose synthase (rfbJ).